Consider the following 721-residue polypeptide: Sodium/hydrogen exchanger 6 (721 aa).

Positions 1–44 (MTSPKPWARSAGSCQTQRAVRTRKKECREEGESDTEKGPAASSA) are disordered. Basic and acidic residues predominate over residues 26-37 (ECREEGESDTEK). The next 12 membrane-spanning stretches (helical) occupy residues 91–111 (SANLLIFILLLTLTILTIWLF), 123–143 (GLAMIYGLLVGLVLRYGIHVP), 196–216 (VTFDPEVFFNILLPPIIFYAG), 231–251 (ILAYAFLGTAISCFVIGSIMY), 272–292 (CLLFGAIVSATDPVTVLAIFH), 298–318 (VELYALLFGESVLNDAVAIVL), 344–364 (IGIFLGIFSGSFAMGAATGVV), 388–412 (MSWSTFLLAEAWGFTGVVAVLFCGI), 434–454 (FELLNFLAENFIFSYMGLTLF), 456–476 (FQNHVFNPTFVVGAFIAIFLG), 499–519 (NFQHMMMFAGLRGAMAFALAI), and 535–555 (LLIVFFTVWVFGGGTTAMLSC).

Belongs to the monovalent cation:proton antiporter 1 (CPA1) transporter (TC 2.A.36) family. As to quaternary structure, homodimer. Interacts with RACK1; regulates the distribution of SLC9A6 between endosomes and the plasma membrane. In terms of processing, ubiquitinated (in vitro). Post-translationally, glycosylated.

It is found in the endosome membrane. It localises to the recycling endosome membrane. The protein localises to the early endosome membrane. The protein resides in the late endosome membrane. Its subcellular location is the cell membrane. It carries out the reaction Na(+)(in) + H(+)(out) = Na(+)(out) + H(+)(in). The catalysed reaction is K(+)(in) + H(+)(out) = K(+)(out) + H(+)(in). Functionally, endosomal Na(+), K(+)/H(+) antiporter. Mediates the electroneutral exchange of endosomal luminal H(+) for a cytosolic Na(+) or K(+). By facilitating proton efflux, SLC9A6 counteracts the acidity generated by vacuolar (V)-ATPase, thereby limiting luminal acidification. Responsible for alkalizing and maintaining the endosomal pH, and consequently in, e.g., endosome maturation and trafficking of recycling endosomal cargo. Plays a critical role during neurodevelopment by regulating synaptic development and plasticity. Implicated in the maintenance of cell polarity in a manner that is dependent on its ability to modulate intravesicular pH. Regulates intracelular pH in some specialized cells, osteoclasts and stereocilia where this transporter localizes to the plasma membrane. The protein is Sodium/hydrogen exchanger 6 of Rattus norvegicus (Rat).